Reading from the N-terminus, the 467-residue chain is UDP-N-acetylmuramate--L-alanine ligase (467 aa).

121-127 (GSHGKTT) is a binding site for ATP.

Belongs to the MurCDEF family.

Its subcellular location is the cytoplasm. It carries out the reaction UDP-N-acetyl-alpha-D-muramate + L-alanine + ATP = UDP-N-acetyl-alpha-D-muramoyl-L-alanine + ADP + phosphate + H(+). The protein operates within cell wall biogenesis; peptidoglycan biosynthesis. Its function is as follows. Cell wall formation. The chain is UDP-N-acetylmuramate--L-alanine ligase from Parasynechococcus marenigrum (strain WH8102).